The sequence spans 255 residues: tRNA (guanine-N(1)-)-methyltransferase (255 aa).

Residues Gly121 and 141–146 each bind S-adenosyl-L-methionine; that span reads IGDYVL. Residues 236-255 form a disordered region; sequence PVKAPNRAGRQKTPKNKTDG. Residues 244–255 are compositionally biased toward basic residues; sequence GRQKTPKNKTDG.

This sequence belongs to the RNA methyltransferase TrmD family. As to quaternary structure, homodimer.

The protein resides in the cytoplasm. It carries out the reaction guanosine(37) in tRNA + S-adenosyl-L-methionine = N(1)-methylguanosine(37) in tRNA + S-adenosyl-L-homocysteine + H(+). In terms of biological role, specifically methylates guanosine-37 in various tRNAs. This Bradyrhizobium diazoefficiens (strain JCM 10833 / BCRC 13528 / IAM 13628 / NBRC 14792 / USDA 110) protein is tRNA (guanine-N(1)-)-methyltransferase.